The primary structure comprises 746 residues: tRNA(Met) cytidine acetyltransferase TmcA (746 aa).

The interval 181-200 is disordered; the sequence is ARAETGGNPPSPGDSACRTE. Residues Q202, 228–237, and R370 contribute to the ATP site; that span reads GRGKSAALGI. One can recognise an N-acetyltransferase domain in the interval 405 to 617; it reads VAVERLDRDA…VHLPHQLADP (213 aa). Acetyl-CoA-binding positions include 517-519, 524-530, E557, and R564; these read IAV and QGQGLGT.

It belongs to the RNA cytidine acetyltransferase family. TmcA subfamily.

Its subcellular location is the cytoplasm. It carries out the reaction cytidine(34) in elongator tRNA(Met) + acetyl-CoA + ATP + H2O = N(4)-acetylcytidine(34) in elongator tRNA(Met) + ADP + phosphate + CoA + H(+). Functionally, catalyzes the formation of N(4)-acetylcytidine (ac(4)C) at the wobble position of tRNA(Met), by using acetyl-CoA as an acetyl donor and ATP (or GTP). The protein is tRNA(Met) cytidine acetyltransferase TmcA of Nitrosococcus halophilus (strain Nc4).